Consider the following 145-residue polypeptide: Hemoglobin subunit beta-1 (145 aa).

In terms of domain architecture, Globin spans 1–145 (TFTNDESQHI…VEAALATGYH (145 aa)). The heme b site is built by H62 and H91.

Belongs to the globin family. As to quaternary structure, major hemoglobin is a tetramer of two alpha-1 chains and two beta-1 chains. Red blood cells.

Involved in oxygen transport from the lung to the various peripheral tissues. The protein is Hemoglobin subunit beta-1 (HBB1) of Triturus cristatus (Great crested newt).